A 510-amino-acid chain; its full sequence is 2,3-bisphosphoglycerate-independent phosphoglycerate mutase (510 aa).

The Mn(2+) site is built by D12 and S62. The active-site Phosphoserine intermediate is S62. Substrate-binding positions include H123, 152-153 (RD), R184, R190, 257-260 (RADR), and K331. Residues D399, H403, D440, H441, and H458 each contribute to the Mn(2+) site.

It belongs to the BPG-independent phosphoglycerate mutase family. In terms of assembly, monomer. It depends on Mn(2+) as a cofactor.

It catalyses the reaction (2R)-2-phosphoglycerate = (2R)-3-phosphoglycerate. The protein operates within carbohydrate degradation; glycolysis; pyruvate from D-glyceraldehyde 3-phosphate: step 3/5. Catalyzes the interconversion of 2-phosphoglycerate and 3-phosphoglycerate. This chain is 2,3-bisphosphoglycerate-independent phosphoglycerate mutase, found in Lawsonia intracellularis (strain PHE/MN1-00).